Here is a 436-residue protein sequence, read N- to C-terminus: MLKVSAVLCVCAAAWCSQSLAAAAAVAAAGGRSDGGNFLDDKQWLTTISQYDKEVGQWNKFRDEVEDDYFRTWSPGKPFDQALDPAKDPCLKMKCSRHKVCIAQDSQTAVCISHRRLTHRMKEAGVDHRQWRGPILSTCKQCPVVYPSPVCGSDGHTYSFQCKLEYQACVLGKQISVKCEGHCPCPSDKPTSTSRNVKRACSDLEFREVANRLRDWFKALHESGSQNKKTKTLLRPERSRFDTSILPICKDSLGWMFNRLDTNYDLLLDQSELRSIYLDKNEQCTKAFFNSCDTYKDSLISNNEWCYCFQRQQDPPCQTELSNIQKRQGVKKLLGQYIPLCDEDGYYKPTQCHGSVGQCWCVDRYGNEVMGSRINGVADCAIDFEISGDFASGDFHEWTDDEDDEDDIMNDEDEIEDDDEDEGDDDDGGDDHDVYI.

An N-terminal signal peptide occupies residues 1-21; that stretch reads MLKVSAVLCVCAAAWCSQSLA. Disulfide bonds link C90–C101, C95–C111, C139–C169, C142–C162, C151–C183, C317–C341, C352–C359, and C361–C380. Residues 133-185 form the Kazal-like domain; the sequence is GPILSTCKQCPVVYPSPVCGSDGHTYSFQCKLEYQACVLGKQISVKCEGHCPC. The Thyroglobulin type-1 domain occupies 314-380; it reads DPPCQTELSN…GSRINGVADC (67 aa). O-linked (Xyl...) (glycosaminoglycan) serine glycosylation is found at S387 and S392. A disordered region spans residues 393–436; the sequence is GDFHEWTDDEDDEDDIMNDEDEIEDDDEDEGDDDDGGDDHDVYI. The segment covering 399 to 430 has biased composition (acidic residues); the sequence is TDDEDDEDDIMNDEDEIEDDDEDEGDDDDGGD.

In terms of processing, contains chondroitin sulfate and heparan sulfate O-linked oligosaccharides. In terms of tissue distribution, expressed in brain.

The protein localises to the secreted. It is found in the extracellular space. The protein resides in the extracellular matrix. In terms of biological role, may participate in diverse steps of neurogenesis. Inhibits the processing of pro-matrix metalloproteinase 2 (MMP-2) by MT1-MMP and MT3-MMP. May interfere with tumor invasion. This chain is Testican-3 (SPOCK3), found in Homo sapiens (Human).